Here is a 155-residue protein sequence, read N- to C-terminus: Protein-export protein SecB (155 aa).

Belongs to the SecB family. As to quaternary structure, homotetramer, a dimer of dimers. One homotetramer interacts with 1 SecA dimer.

The protein localises to the cytoplasm. One of the proteins required for the normal export of preproteins out of the cell cytoplasm. It is a molecular chaperone that binds to a subset of precursor proteins, maintaining them in a translocation-competent state. It also specifically binds to its receptor SecA. In Vibrio vulnificus (strain CMCP6), this protein is Protein-export protein SecB.